The following is a 62-amino-acid chain: Large ribosomal subunit protein bL33 (62 aa).

Belongs to the bacterial ribosomal protein bL33 family.

In Bacteroides thetaiotaomicron (strain ATCC 29148 / DSM 2079 / JCM 5827 / CCUG 10774 / NCTC 10582 / VPI-5482 / E50), this protein is Large ribosomal subunit protein bL33.